A 212-amino-acid polypeptide reads, in one-letter code: Acyl-homoserine-lactone synthase (212 aa).

The protein belongs to the autoinducer synthase family.

The enzyme catalyses a fatty acyl-[ACP] + S-adenosyl-L-methionine = an N-acyl-L-homoserine lactone + S-methyl-5'-thioadenosine + holo-[ACP] + H(+). Functionally, required for the synthesis of OHHL (N-(3-oxohexanoyl)-L-homoserine lactone), an autoinducer molecule which binds to TraR and thus acts in the control of conjugal transfer. The polypeptide is Acyl-homoserine-lactone synthase (traI) (Rhizobium radiobacter (Agrobacterium tumefaciens)).